The following is a 249-amino-acid chain: Ubiquinone biosynthesis O-methyltransferase (249 aa).

A disordered region spans residues 1–23 (MTSPSQVLPASAGKPTGPNADPK). Arg52, Gly71, Asp92, and Met136 together coordinate S-adenosyl-L-methionine.

Belongs to the methyltransferase superfamily. UbiG/COQ3 family.

The catalysed reaction is a 3-demethylubiquinol + S-adenosyl-L-methionine = a ubiquinol + S-adenosyl-L-homocysteine + H(+). It catalyses the reaction a 3-(all-trans-polyprenyl)benzene-1,2-diol + S-adenosyl-L-methionine = a 2-methoxy-6-(all-trans-polyprenyl)phenol + S-adenosyl-L-homocysteine + H(+). Its pathway is cofactor biosynthesis; ubiquinone biosynthesis. Functionally, O-methyltransferase that catalyzes the 2 O-methylation steps in the ubiquinone biosynthetic pathway. In Cupriavidus pinatubonensis (strain JMP 134 / LMG 1197) (Cupriavidus necator (strain JMP 134)), this protein is Ubiquinone biosynthesis O-methyltransferase.